The following is a 194-amino-acid chain: MGMYKYIREAWKSPKKSYVGELLKKRMIQWRRDPVVKRIERPTRLDRARSLGYQAKQGYVVVRVRVRRGGRKRPRWKGGRKPSKMGMVKYSPKKSLQWIAEEKAARKFPNLEVLNSYWVGEDGMYKWFEVIMVDPHHPVIKSDPKIAWIAGKAHKGRVFRGLTSAGKRSRGLLNKGKGAEKVRPSIRAHQGKGK.

Positions 168-194 (RSRGLLNKGKGAEKVRPSIRAHQGKGK) are disordered. A compositionally biased stretch (basic residues) spans 184–194 (PSIRAHQGKGK).

It belongs to the eukaryotic ribosomal protein eL15 family. Part of the 50S ribosomal subunit.

The sequence is that of Large ribosomal subunit protein eL15 from Thermococcus kodakarensis (strain ATCC BAA-918 / JCM 12380 / KOD1) (Pyrococcus kodakaraensis (strain KOD1)).